The primary structure comprises 1390 residues: Bromodomain adjacent to zinc finger domain protein 2 (1390 aa).

3 disordered regions span residues Ala30–Ala67, Ala178–Asn215, and Gln235–Asn269. Residues Ala35–Asn45 are compositionally biased toward polar residues. Composition is skewed to low complexity over residues Gly46–Ser63 and Ala186–Asn215. Residues Asp243–Asn269 are compositionally biased toward basic and acidic residues. The MBD domain maps to Lys323–Val395. Positions Ser524 to Met588 constitute a DDT domain. A compositionally biased stretch (basic and acidic residues) spans Lys705–Lys724. The interval Lys705–Ala729 is disordered. The segment at Glu1100–Glu1149 adopts a PHD-type zinc-finger fold. The tract at residues Glu1218–Gly1241 is disordered. A Bromo domain is found at Leu1273–Leu1377.

This sequence belongs to the WAL family. In terms of assembly, interacts with set-6. Broadly expressed in the nervous system, including head, body and tail neurons.

It is found in the nucleus. The protein localises to the chromosome. In terms of biological role, chromatin reader protein, involved in positively modulating the rate of age-related behavioral deterioration. Positively modulates the level of global trimethylated 'Lys-9' of histone H3 (H3K9me3), but not of H3K9me2 or H3K9me1. May repress the expression of mitochondrial function-related genes by occupying their promoter regions, working in concert with histone methyltransferase, set-6. Involved in modulation of the mitochondrial unfolded protein response (UPR). Negatively regulates expression of bas-1, a serotonin (5-HT) and dopamine synthesizing enzyme (DOPA decarboxylase), with aging. Negatively modulates levels of endogenous 5-HT and dopamine with aging. Involved in modulating longevity, probably as a result of enhanced stress resistance via mechanisms related to dietary restriction and mitochondrial function. The protein is Bromodomain adjacent to zinc finger domain protein 2 of Caenorhabditis elegans.